The primary structure comprises 386 residues: L-lactate dehydrogenase (386 aa).

The FMN hydroxy acid dehydrogenase domain occupies Met-1–Arg-380. Substrate is bound at residue Tyr-24. FMN contacts are provided by Ser-106 and Gln-127. Tyr-129 is a substrate binding site. Thr-155 lines the FMN pocket. Substrate is bound at residue Arg-164. Residue Lys-251 coordinates FMN. The Proton acceptor role is filled by His-275. Substrate is bound at residue Arg-278. Residue Asp-306–Arg-330 participates in FMN binding.

It belongs to the FMN-dependent alpha-hydroxy acid dehydrogenase family. FMN serves as cofactor.

Its subcellular location is the cell inner membrane. It carries out the reaction (S)-lactate + A = pyruvate + AH2. In terms of biological role, catalyzes the conversion of L-lactate to pyruvate. Is coupled to the respiratory chain. In Xanthomonas campestris pv. campestris (strain B100), this protein is L-lactate dehydrogenase.